The sequence spans 292 residues: MTTKFHTIGLIGKPHHPGTNQTLKRLHHWLTMQGYEVLVEERVATELGPHIVAVDLLEIGERCDLAIVVGGDGNMLGAARVLARFEVGVIGVNRGNLGFLTDLPPDAFEEALAKVLDGEFDTEHRFLLEAEVYRHGQLKASNTAVNEAVLHPGKIAHMIEFEVYIDNQFMYSQRADGMIVSTPTGSTAYALSAGGAILTPNLQALILVPMFPHTLSCRPIVVDACSTIKMVVSPENGENLEVSCDGHVHLAVLPGDEIIVRRSSEQLRLIHPKGHNYFHVLRSKLGWGSKLF.

D72 serves as the catalytic Proton acceptor. NAD(+)-binding positions include 72-73, 146-147, H157, R174, D176, and 187-192; these read DG, NE, and TAYALS.

This sequence belongs to the NAD kinase family. A divalent metal cation serves as cofactor.

It is found in the cytoplasm. The enzyme catalyses NAD(+) + ATP = ADP + NADP(+) + H(+). Its function is as follows. Involved in the regulation of the intracellular balance of NAD and NADP, and is a key enzyme in the biosynthesis of NADP. Catalyzes specifically the phosphorylation on 2'-hydroxyl of the adenosine moiety of NAD to yield NADP. This is NAD kinase from Shewanella oneidensis (strain ATCC 700550 / JCM 31522 / CIP 106686 / LMG 19005 / NCIMB 14063 / MR-1).